The primary structure comprises 946 residues: Clumping factor A (946 aa).

The signal sequence occupies residues 1-39 (MNMKKKEKHAIRKKSIGVASVLVGTLIGFGLLSSKEADA). A YSIRK-G/S signaling motif motif is present at residues 9–20 (HAIRKKSIGVAS). 2 disordered regions span residues 34–199 (SKEA…SNKD) and 528–917 (FNNG…SEDE). A ligand binding A region region spans residues 40-542 (SENSVTQSDS…GSGDGIDKPV (503 aa)). A compositionally biased stretch (low complexity) spans 47–65 (SDSASNESKSNDSSSVSAA). Residues 71 to 111 (TNVSDTKTSSNTNNGETSVAQNPAQQETTQSALTNATTEET) show a composition bias toward polar residues. 2 stretches are compositionally biased toward low complexity: residues 117–131 (ATTATNQANTPATTQ) and 142–161 (NQTSNETTSNDTNTVSSVNS). Polar residues predominate over residues 162-199 (PQNSTNAENVSTTQDTSTEATPSNNESAPQSTDASNKD). Residues 546–564 (QPDEPGEIEPIPEDSDSDP) are compositionally biased toward acidic residues. Low complexity predominate over residues 565–597 (GSDSGSDSNSDSGSDSGSDSTSDSGSDSASDSD). The span at 598–874 (SASDSDSASD…DSDSESDSNS (277 aa)) shows a compositional bias: acidic residues. Residues 875–893 (DSESGSNNNVVPPNSPKNG) are compositionally biased toward low complexity. The span at 900 to 909 (NEAKDSKEPL) shows a compositional bias: basic and acidic residues. The LPXTG sorting signal signature appears at 909-913 (LPDTG). Residue Thr-912 is modified to Pentaglycyl murein peptidoglycan amidated threonine. Residues 913–946 (GSEDEANTSLIWGLLASIGSLLLFRRKKENKDKK) constitute a propeptide, removed by sortase.

The protein belongs to the serine-aspartate repeat-containing protein (SDr) family.

It is found in the secreted. The protein resides in the cell wall. Cell surface-associated protein implicated in virulence. Promotes bacterial attachment exclusively to the gamma-chain of human fibrinogen. Induces formation of bacterial clumps. In Staphylococcus aureus (strain MW2), this protein is Clumping factor A (clfA).